A 342-amino-acid polypeptide reads, in one-letter code: Succinylglutamate desuccinylase (342 aa).

Residues H63, E66, and H155 each coordinate Zn(2+). E219 is a catalytic residue.

This sequence belongs to the AspA/AstE family. Succinylglutamate desuccinylase subfamily. It depends on Zn(2+) as a cofactor.

It carries out the reaction N-succinyl-L-glutamate + H2O = L-glutamate + succinate. Its pathway is amino-acid degradation; L-arginine degradation via AST pathway; L-glutamate and succinate from L-arginine: step 5/5. Transforms N(2)-succinylglutamate into succinate and glutamate. The chain is Succinylglutamate desuccinylase from Vibrio parahaemolyticus serotype O3:K6 (strain RIMD 2210633).